A 213-amino-acid chain; its full sequence is Large ribosomal subunit protein uL1 (213 aa).

This sequence belongs to the universal ribosomal protein uL1 family. In terms of assembly, part of the 50S ribosomal subunit.

In terms of biological role, probably involved in E site tRNA release. Binds directly to 23S rRNA. Its function is as follows. Protein L1 is also a translational repressor protein, it controls the translation of the L1 operon by binding to its mRNA. Thus it also controls transcription of L10 and L12 by translational coupling. Unlike the case in E.coli, where the site is in the untranslated mRNA leader, this site is within the L1 protein's structural gene. The polypeptide is Large ribosomal subunit protein uL1 (Methanococcus vannielii (strain ATCC 35089 / DSM 1224 / JCM 13029 / OCM 148 / SB)).